The sequence spans 341 residues: Protein MENT (341 aa).

Positions 1–23 are cleaved as a signal peptide; sequence MVPAAGALLWVLLLNLGPRAAGA. Positions 115 to 196 are disordered; it reads AGKDSTSREL…SPSPTAMPSP (82 aa). Residues 127-155 are compositionally biased toward polar residues; sequence ATPNTAGSSSTRFIANSQEPEIRLTSSLP.

In terms of processing, phosphorylation sites are present in the extracellular medium. Plasma. Overexpressed in lymphomas.

It is found in the secreted. Functionally, involved in control of cellular proliferation. Onconcogenic modifier contributing to the tumor suppressor function of DNMT3B. This chain is Protein MENT (MENT), found in Homo sapiens (Human).